The chain runs to 499 residues: Ubiquitin carboxyl-terminal hydrolase 16 (499 aa).

The 445-residue stretch at 53–497 (VGLINRGNDC…YAYMLYYERV (445 aa)) folds into the USP domain. The Nucleophile role is filled by cysteine 62. The active-site Proton acceptor is the histidine 407.

This sequence belongs to the peptidase C19 family.

It catalyses the reaction Thiol-dependent hydrolysis of ester, thioester, amide, peptide and isopeptide bonds formed by the C-terminal Gly of ubiquitin (a 76-residue protein attached to proteins as an intracellular targeting signal).. This Saccharomyces cerevisiae (strain ATCC 204508 / S288c) (Baker's yeast) protein is Ubiquitin carboxyl-terminal hydrolase 16 (UBP16).